A 359-amino-acid polypeptide reads, in one-letter code: 3-isopropylmalate dehydrogenase (359 aa).

Substrate-binding residues include Arg-97, Arg-107, Arg-135, and Asp-224. 3 residues coordinate Mg(2+): Asp-224, Asp-248, and Asp-252. 282-294 (GSAPDIAGKDIAN) contacts NAD(+).

This sequence belongs to the isocitrate and isopropylmalate dehydrogenases family. LeuB type 1 subfamily. As to quaternary structure, homodimer. It depends on Mg(2+) as a cofactor. The cofactor is Mn(2+).

Its subcellular location is the cytoplasm. It catalyses the reaction (2R,3S)-3-isopropylmalate + NAD(+) = 4-methyl-2-oxopentanoate + CO2 + NADH. It participates in amino-acid biosynthesis; L-leucine biosynthesis; L-leucine from 3-methyl-2-oxobutanoate: step 3/4. Functionally, catalyzes the oxidation of 3-carboxy-2-hydroxy-4-methylpentanoate (3-isopropylmalate) to 3-carboxy-4-methyl-2-oxopentanoate. The product decarboxylates to 4-methyl-2 oxopentanoate. The polypeptide is 3-isopropylmalate dehydrogenase (Prochlorococcus marinus (strain NATL2A)).